The following is a 163-amino-acid chain: Phosphopantetheine adenylyltransferase (163 aa).

Residue Ser-8 participates in substrate binding. ATP contacts are provided by residues 8–9 (SF) and His-16. Lys-40, Thr-72, and Arg-86 together coordinate substrate. ATP contacts are provided by residues 87-89 (GLR), Glu-97, and 122-128 (HSFLSSS).

Belongs to the bacterial CoaD family. Homohexamer. Mg(2+) serves as cofactor.

It localises to the cytoplasm. It catalyses the reaction (R)-4'-phosphopantetheine + ATP + H(+) = 3'-dephospho-CoA + diphosphate. Its pathway is cofactor biosynthesis; coenzyme A biosynthesis; CoA from (R)-pantothenate: step 4/5. Functionally, reversibly transfers an adenylyl group from ATP to 4'-phosphopantetheine, yielding dephospho-CoA (dPCoA) and pyrophosphate. This Parasynechococcus marenigrum (strain WH8102) protein is Phosphopantetheine adenylyltransferase.